An 89-amino-acid chain; its full sequence is NADH-ubiquinone oxidoreductase chain 4L (89 aa).

3 consecutive transmembrane segments (helical) span residues 1–21 (MNLS…NRKN), 22–42 (IILM…LILI), and 55–75 (FAIY…GILV).

Belongs to the complex I subunit 4L family.

Its subcellular location is the mitochondrion membrane. The catalysed reaction is a ubiquinone + NADH + 5 H(+)(in) = a ubiquinol + NAD(+) + 4 H(+)(out). Functionally, core subunit of the mitochondrial membrane respiratory chain NADH dehydrogenase (Complex I) that is believed to belong to the minimal assembly required for catalysis. Complex I functions in the transfer of electrons from NADH to the respiratory chain. The immediate electron acceptor for the enzyme is believed to be ubiquinone. In Trichophyton rubrum (Athlete's foot fungus), this protein is NADH-ubiquinone oxidoreductase chain 4L (ND4L).